Here is a 193-residue protein sequence, read N- to C-terminus: General stress protein 16U (193 aa).

Belongs to the CAPAB/TerDEXZ family.

This is General stress protein 16U (yceD) from Bacillus subtilis (strain 168).